Reading from the N-terminus, the 255-residue chain is MLFFSRTTRWVLAPLADRLDQPDQACTPLSSNNPLLRRILTGVEQLLQERSALKEQARALTQEVTQLDERVACRDALLRQWEARWALVSHGAGELFWELEVNGTAAPSLACAMRWTGSASILAPGIDQLGHWNEQLHPADRQRHLDTLARHLADRSGRTPFVLDVRIQPPSGDDYRWCRISGDSRRDAQGLPVAMGGSLRDIHQQHLQDEVLELAATRFDISREMLHDGLWDIEVVAGDPANPKNTIWWSSQMRR.

This is an uncharacterized protein from Pseudomonas chlororaphis (Pseudomonas aureofaciens).